Here is a 339-residue protein sequence, read N- to C-terminus: UDP-N-acetylenolpyruvoylglucosamine reductase (339 aa).

Residues 18-189 (GIDVKARYFS…LRVRFALTRT (172 aa)) enclose the FAD-binding PCMH-type domain. Arginine 166 is a catalytic residue. Serine 239 (proton donor) is an active-site residue. Residue glutamate 335 is part of the active site.

This sequence belongs to the MurB family. FAD is required as a cofactor.

It is found in the cytoplasm. The catalysed reaction is UDP-N-acetyl-alpha-D-muramate + NADP(+) = UDP-N-acetyl-3-O-(1-carboxyvinyl)-alpha-D-glucosamine + NADPH + H(+). It functions in the pathway cell wall biogenesis; peptidoglycan biosynthesis. Its function is as follows. Cell wall formation. The chain is UDP-N-acetylenolpyruvoylglucosamine reductase from Pseudomonas putida (strain ATCC 47054 / DSM 6125 / CFBP 8728 / NCIMB 11950 / KT2440).